We begin with the raw amino-acid sequence, 312 residues long: Phospholipid phosphatase 3 (312 aa).

Residues 1–33 (MQSYKYDKAIVPESKNGGSPALNNNPRKGGSKR) are Cytoplasmic-facing. Ser19 carries the post-translational modification Phosphoserine. Residues 34–54 (VLLICLDLFCLFMAALPFLII) form a helical membrane-spanning segment. Residues 55 to 85 (ETSTIKPYRRGFYCNDESIKYPLKVSETIND) are Extracellular-facing. The helical transmembrane segment at 86–106 (AVLCAVGIVIAILAIITGEFY) threads the bilayer. Topologically, residues 107–123 (RIYYLKEKSRSTTQNPY) are cytoplasmic. Residues 109–110 (YY) carry the Dityrosine basolateral targeting motif motif. A helical transmembrane segment spans residues 124–144 (VAALYKQVGCFLFGCAISQSF). The Extracellular segment spans residues 145–194 (TDIAKVSIGRLRPHFLSVCDPDFSQINCSEGYIQNYRCRGEDSKVQEARK). The tract at residues 149-157 (KVSIGRLRP) is phosphatase sequence motif I. N-linked (GlcNAc...) asparagine glycosylation occurs at Asn171. An Integrin-binding motif motif is present at residues 183–185 (RGE). A helical transmembrane segment spans residues 195–215 (SFFSGHASFSMFTMLYLVLYL). The interval 197 to 200 (FSGH) is phosphatase sequence motif II. His200 (proton donors) is an active-site residue. Topologically, residues 216 to 226 (QARFTWRGARL) are cytoplasmic. A helical membrane pass occupies residues 227–244 (LRPLLQFTLLMMAFYTGL). Residues 245–256 (SRVSDYKHHPSD) are phosphatase sequence motif III. Topologically, residues 245–258 (SRVSDYKHHPSDVL) are extracellular. The Nucleophile role is filled by His252. Residues 259–279 (AGFAQGALVACCIVFFVSDLF) traverse the membrane as a helical segment. The tract at residues 276–312 (SDLFKTKTSLSLPAPAIRREILSPVDIIDRNNHHNMV) is mediates interaction with CTNND1. The Cytoplasmic portion of the chain corresponds to 280–312 (KTKTSLSLPAPAIRREILSPVDIIDRNNHHNMV).

This sequence belongs to the PA-phosphatase related phosphoesterase family. As to quaternary structure, forms functional homodimers and homooligomers that are not required for substrate recognition and catalytic activity. Can also form heterooligomers with other PLPP2 and PLPP3. Interacts with CTNND1; negatively regulates the PLPP3-mediated stabilization of beta-catenin/CTNNB1. N-glycosylated. Contains high-mannose oligosaccharides. As to expression, detected in lung, cerebellum and heart atrium.

The protein localises to the cell membrane. Its subcellular location is the basolateral cell membrane. It is found in the endoplasmic reticulum membrane. It localises to the endoplasmic reticulum-Golgi intermediate compartment membrane. The protein resides in the golgi apparatus membrane. The protein localises to the golgi apparatus. Its subcellular location is the trans-Golgi network membrane. It is found in the membrane raft. The catalysed reaction is a 1,2-diacyl-sn-glycero-3-phosphate + H2O = a 1,2-diacyl-sn-glycerol + phosphate. The enzyme catalyses 1,2-dihexadecanoyl-sn-glycero-3-phosphate + H2O = 1,2-dihexadecanoyl-sn-glycerol + phosphate. It carries out the reaction 1,2-di-(9Z-octadecenoyl)-sn-glycero-3-phosphate + H2O = 1,2-di-(9Z-octadecenoyl)-sn-glycerol + phosphate. It catalyses the reaction a monoacyl-sn-glycero-3-phosphate + H2O = a monoacylglycerol + phosphate. The catalysed reaction is (9Z)-octadecenoyl-sn-glycero-3-phosphate + H2O = (9Z-octadecenoyl)-glycerol + phosphate. The enzyme catalyses sphing-4-enine 1-phosphate + H2O = sphing-4-enine + phosphate. It carries out the reaction an N-acylsphing-4-enine 1-phosphate + H2O = an N-acylsphing-4-enine + phosphate. It catalyses the reaction N-(octanoyl)-sphing-4-enine-1-phosphate + H2O = N-octanoylsphing-4-enine + phosphate. The catalysed reaction is N-(9Z-octadecenoyl)-ethanolamine phosphate + H2O = N-(9Z-octadecenoyl) ethanolamine + phosphate. Its pathway is lipid metabolism; phospholipid metabolism. With respect to regulation, magnesium-independent phospholipid phosphatase. Insensitive to N-ethylmaleimide. Magnesium-independent phospholipid phosphatase of the plasma membrane that catalyzes the dephosphorylation of a variety of glycerolipid and sphingolipid phosphate esters including phosphatidate/PA, lysophosphatidate/LPA, diacylglycerol pyrophosphate/DGPP, sphingosine 1-phosphate/S1P and ceramide 1-phosphate/C1P. Also acts on N-oleoyl ethanolamine phosphate/N-(9Z-octadecenoyl)-ethanolamine phosphate, a potential physiological compound. Has both an extracellular and an intracellular phosphatase activity, allowing the hydrolysis and the cellular uptake of these bioactive lipid mediators from the milieu, regulating signal transduction in different cellular processes. Through the dephosphorylation of extracellular sphingosine-1-phosphate and the regulation of its extra- and intracellular availability, plays a role in vascular homeostasis, regulating endothelial cell migration, adhesion, survival, proliferation and the production of pro-inflammatory cytokines. By maintaining the appropriate levels of this lipid in the cerebellum, also ensure its proper development and function. Through its intracellular lipid phosphatase activity may act in early compartments of the secretory pathway, regulating the formation of Golgi to endoplasmic reticulum retrograde transport carriers. Functionally, independently of this phosphatase activity may also function in the Wnt signaling pathway and the stabilization of beta-catenin/CTNNB1, thereby regulating cell proliferation, migration and differentiation in angiogenesis or yet in tumor growth. Also plays a role in integrin-mediated cell-cell adhesion in angiogenesis. The protein is Phospholipid phosphatase 3 of Mus musculus (Mouse).